Reading from the N-terminus, the 1828-residue chain is Protein TIC 214 (1828 aa).

Transmembrane regions (helical) follow at residues 18-38 (IINS…FSIG), 64-84 (FITG…HLAM), 87-107 (PYTI…WKNH), 124-144 (FSIQ…HFVL), 172-192 (VGWL…LFWI), and 222-242 (VNIF…SPIL). Positions 270–279 (SEAKETKQEQ) are enriched in basic and acidic residues. 4 disordered regions span residues 270–301 (SEAK…PNKL), 618–637 (DLQQ…HAIR), 741–763 (EFKT…EDKK), and 1533–1571 (KEEF…RQSK). Positions 1550-1562 (KDVEKDYAKSDIK) are enriched in basic and acidic residues.

Belongs to the TIC214 family. Part of the Tic complex.

It localises to the plastid. Its subcellular location is the chloroplast inner membrane. Involved in protein precursor import into chloroplasts. May be part of an intermediate translocation complex acting as a protein-conducting channel at the inner envelope. This is Protein TIC 214 from Calycanthus floridus var. glaucus (Eastern sweetshrub).